The primary structure comprises 357 residues: Ribosomal RNA large subunit methyltransferase M (357 aa).

S-adenosyl-L-methionine is bound by residues Ser183, 216–219, Asp235, Asp255, and Asp271; that span reads APGG. Residue Lys300 is the Proton acceptor of the active site.

This sequence belongs to the class I-like SAM-binding methyltransferase superfamily. RNA methyltransferase RlmE family. RlmM subfamily. Monomer.

Its subcellular location is the cytoplasm. It catalyses the reaction cytidine(2498) in 23S rRNA + S-adenosyl-L-methionine = 2'-O-methylcytidine(2498) in 23S rRNA + S-adenosyl-L-homocysteine + H(+). Functionally, catalyzes the 2'-O-methylation at nucleotide C2498 in 23S rRNA. The sequence is that of Ribosomal RNA large subunit methyltransferase M from Pseudomonas syringae pv. syringae (strain B728a).